A 432-amino-acid chain; its full sequence is 3-phosphoshikimate 1-carboxyvinyltransferase (432 aa).

Positions 21, 22, and 26 each coordinate 3-phosphoshikimate. Position 21 (lysine 21) interacts with phosphoenolpyruvate. 2 residues coordinate phosphoenolpyruvate: glycine 94 and arginine 122. 3-phosphoshikimate is bound by residues serine 168, glutamine 170, aspartate 317, and lysine 344. Glutamine 170 lines the phosphoenolpyruvate pocket. The active-site Proton acceptor is the aspartate 317. Residues arginine 348 and arginine 391 each contribute to the phosphoenolpyruvate site.

The protein belongs to the EPSP synthase family. In terms of assembly, monomer.

Its subcellular location is the cytoplasm. The catalysed reaction is 3-phosphoshikimate + phosphoenolpyruvate = 5-O-(1-carboxyvinyl)-3-phosphoshikimate + phosphate. The protein operates within metabolic intermediate biosynthesis; chorismate biosynthesis; chorismate from D-erythrose 4-phosphate and phosphoenolpyruvate: step 6/7. In terms of biological role, catalyzes the transfer of the enolpyruvyl moiety of phosphoenolpyruvate (PEP) to the 5-hydroxyl of shikimate-3-phosphate (S3P) to produce enolpyruvyl shikimate-3-phosphate and inorganic phosphate. The protein is 3-phosphoshikimate 1-carboxyvinyltransferase of Petrotoga mobilis (strain DSM 10674 / SJ95).